A 128-amino-acid chain; its full sequence is Ribosome-binding factor A (128 aa).

Belongs to the RbfA family. As to quaternary structure, monomer. Binds 30S ribosomal subunits, but not 50S ribosomal subunits or 70S ribosomes.

Its subcellular location is the cytoplasm. One of several proteins that assist in the late maturation steps of the functional core of the 30S ribosomal subunit. Associates with free 30S ribosomal subunits (but not with 30S subunits that are part of 70S ribosomes or polysomes). Required for efficient processing of 16S rRNA. May interact with the 5'-terminal helix region of 16S rRNA. The chain is Ribosome-binding factor A from Idiomarina loihiensis (strain ATCC BAA-735 / DSM 15497 / L2-TR).